A 125-amino-acid chain; its full sequence is Small ribosomal subunit protein uS13 (125 aa).

The segment at 94 to 125 is disordered; that stretch reads SLPVRGQRTQTNARTRKGKRKTVAGKKKAVKK. The segment covering 107–125 has biased composition (basic residues); sequence RTRKGKRKTVAGKKKAVKK.

It belongs to the universal ribosomal protein uS13 family. As to quaternary structure, part of the 30S ribosomal subunit. Forms a loose heterodimer with protein S19. Forms two bridges to the 50S subunit in the 70S ribosome.

Functionally, located at the top of the head of the 30S subunit, it contacts several helices of the 16S rRNA. In the 70S ribosome it contacts the 23S rRNA (bridge B1a) and protein L5 of the 50S subunit (bridge B1b), connecting the 2 subunits; these bridges are implicated in subunit movement. Contacts the tRNAs in the A and P-sites. The chain is Small ribosomal subunit protein uS13 from Prosthecochloris aestuarii (strain DSM 271 / SK 413).